The sequence spans 161 residues: Ribonuclease P protein component (161 aa).

This sequence belongs to the RnpA family. As to quaternary structure, consists of a catalytic RNA component (M1 or rnpB) and a protein subunit.

It catalyses the reaction Endonucleolytic cleavage of RNA, removing 5'-extranucleotides from tRNA precursor.. Its function is as follows. RNaseP catalyzes the removal of the 5'-leader sequence from pre-tRNA to produce the mature 5'-terminus. It can also cleave other RNA substrates such as 4.5S RNA. The protein component plays an auxiliary but essential role in vivo by binding to the 5'-leader sequence and broadening the substrate specificity of the ribozyme. This is Ribonuclease P protein component from Helicobacter pylori (strain J99 / ATCC 700824) (Campylobacter pylori J99).